The sequence spans 532 residues: Calnexin homolog 2 (532 aa).

The N-terminal stretch at 1–25 is a signal peptide; the sequence is MRERIITFVSLLLVALLSFPSVSYC. The Lumenal segment spans residues 26 to 468; that stretch reads DDQTILYESF…EKAETQPNLT (443 aa). Ca(2+)-binding residues include Ser-34 and Asp-65. Cysteines 110 and 145 form a disulfide. Tyr-114, Lys-116, Tyr-136, and Asp-143 together coordinate an alpha-D-glucoside. The tract at residues 208–302 is disordered; that stretch reads NLLSAEDFEP…DEEDGEWEAP (95 aa). The interval 225–358 is p domain (Extended arm); the sequence is IPDPEDKKPE…RDIPNPDYFE (134 aa). The span at 226–242 shows a compositional bias: basic and acidic residues; that stretch reads PDPEDKKPEDWDERAKI. Repeat copies occupy residues 227–238, 244–255, 263–274, 282–293, and 297–307. 2 4 X approximate repeats regions span residues 227–293 and 297–354; these read DPED…DWDD and GEWE…IPNP. 2 stretches are compositionally biased toward acidic residues: residues 252-283 and 290-299; these read DWDE…VEDP and DWDDEEDGEW. Cys-309 and Cys-315 are oxidised to a cystine. 3 consecutive repeat copies span residues 316–326, 330–340, and 344–354. Glu-373 contributes to the an alpha-D-glucoside binding site. Asp-384 provides a ligand contact to Ca(2+). A glycan (N-linked (GlcNAc...) asparagine) is linked at Asn-466. Residues 469-489 form a helical membrane-spanning segment; the sequence is IGVLISIVIVFLSLFFKLIFG. Residues 490-532 are Cytoplasmic-facing; the sequence is GAKAKVEKKKPETAAETSTSEAKTEEKAEAVAAPRKRQTRRES. Positions 493–532 are disordered; the sequence is AKVEKKKPETAAETSTSEAKTEEKAEAVAAPRKRQTRRES. Positions 523–532 are enriched in basic residues; that stretch reads PRKRQTRRES.

Belongs to the calreticulin family.

The protein localises to the endoplasmic reticulum membrane. In terms of biological role, calcium-binding protein that interacts with newly synthesized monoglucosylated glycoproteins in the endoplasmic reticulum. It may act in assisting protein assembly and/or in the retention within the ER of unassembled protein subunits. It seems to play a major role in the quality control apparatus of the ER by the retention of incorrectly folded proteins. The chain is Calnexin homolog 2 from Arabidopsis thaliana (Mouse-ear cress).